The chain runs to 159 residues: MTQLTHFDTAGQAHMVDVGDKASTHRVAVATGTITMQPATFTLVRDGSAKKGDVIGIARVAAIMATKRTADLIPLCHPIGLTKVAVEFALDEATATVACTVRTETRGQTGVEMEALTGVQVALLTIYDMCKAVDRGMVIGNVKLLEKHGGKSGDWVAAG.

Residues 75–77 (LCH) and 113–114 (ME) contribute to the substrate site. The active site involves Asp128.

This sequence belongs to the MoaC family. As to quaternary structure, homohexamer; trimer of dimers.

The enzyme catalyses (8S)-3',8-cyclo-7,8-dihydroguanosine 5'-triphosphate = cyclic pyranopterin phosphate + diphosphate. It participates in cofactor biosynthesis; molybdopterin biosynthesis. In terms of biological role, catalyzes the conversion of (8S)-3',8-cyclo-7,8-dihydroguanosine 5'-triphosphate to cyclic pyranopterin monophosphate (cPMP). In Cupriavidus necator (strain ATCC 17699 / DSM 428 / KCTC 22496 / NCIMB 10442 / H16 / Stanier 337) (Ralstonia eutropha), this protein is Cyclic pyranopterin monophosphate synthase.